Reading from the N-terminus, the 149-residue chain is Flagellar assembly factor FliW (149 aa).

The protein belongs to the FliW family. Interacts with translational regulator CsrA and flagellin(s).

The protein resides in the cytoplasm. Its function is as follows. Acts as an anti-CsrA protein, binds CsrA and prevents it from repressing translation of its target genes, one of which is flagellin. Binds to flagellin and participates in the assembly of the flagellum. The sequence is that of Flagellar assembly factor FliW from Thermotoga maritima (strain ATCC 43589 / DSM 3109 / JCM 10099 / NBRC 100826 / MSB8).